The chain runs to 776 residues: MAISTMLGSISCCPSPKGYEMVKQHSVRLKHCVFTVKSSVPVYSEGVNDGIKLHSFGNLVKKKVFLDTSKRFYFQGRWSESSGRRVETYAGVDVASAVDVINDLGFDTLTFLMVTVIIVPAFRILKASPILGFFFAGVVLNQFGLIRNLTDVKVLSEWGILFLLFEMGLELSLARLKALAKFAFGMGLTQVLLCTAAFTAFELPPNGAIGTKILEFLFHSRPDLVNIRSIDEAVVIGAALSLSSSAFVLQLLAEKGELPTRFGSATLGILLLQDIAVVPLLVILPVLESQDIGGESIWPMLAKESAKALGGLGILSLGGKFFLRRIFEVVAETRSSEAFVALCLLTVAGTSLVTQWLGFSDTLGAFLAGALLAETNFRTQIEADIRPFRGLLLGLFFVTTGTSIDMEVLFREWPNVLSLLGGLIVIKTLIITAIGPRVGLTIQESVRVGFLLSQGGEFAFVVFSLANRLGVLPNELNKLLIIVVVLSMALTPYLNQLGRKAADFLDERLDPGEKIGEDVNFDVSESIVIIGFGQMGQVLANFLSTPLVSDSDLVGWPYIGFDLNPAVVKESRKLGFPILYGDGSRPSVLQSAGVSSPKAIMIMYKGKKRTTEAVQRLRLAFPGSPIYARAQDLPHLLELKKAGATDAILENAETSLQLGSKLLTGFGVMSDDVSFLSKVFRDSMEIQAQEEITASETNAGLKPMQMKASDINVVSAATQKQVQLMKPMQMKASDSNSDSAAEILQETAGLSQPPEIDDSSVNIDNGFVGKADKAQD.

Residues 1 to 72 constitute a chloroplast transit peptide; sequence MAISTMLGSI…KVFLDTSKRF (72 aa). At 73–93 the chain is on the lumenal, thylakoid side; that stretch reads YFQGRWSESSGRRVETYAGVD. The chain crosses the membrane as a helical span at residues 94-114; it reads VASAVDVINDLGFDTLTFLMV. Thr115 is a topological domain (stromal). Residues 116–136 form a helical membrane-spanning segment; that stretch reads VIIVPAFRILKASPILGFFFA. Over 137–153 the chain is Lumenal, thylakoid; that stretch reads GVVLNQFGLIRNLTDVK. The helical transmembrane segment at 154–174 threads the bilayer; sequence VLSEWGILFLLFEMGLELSLA. At 175–181 the chain is on the stromal side; it reads RLKALAK. A helical membrane pass occupies residues 182-202; sequence FAFGMGLTQVLLCTAAFTAFE. Residues 203–232 are Lumenal, thylakoid-facing; the sequence is LPPNGAIGTKILEFLFHSRPDLVNIRSIDE. Residues 233 to 253 form a helical membrane-spanning segment; that stretch reads AVVIGAALSLSSSAFVLQLLA. Residues 254–266 lie on the Stromal side of the membrane; sequence EKGELPTRFGSAT. The helical transmembrane segment at 267–287 threads the bilayer; sequence LGILLLQDIAVVPLLVILPVL. Residues 288-296 are Lumenal, thylakoid-facing; the sequence is ESQDIGGES. The helical transmembrane segment at 297–317 threads the bilayer; it reads IWPMLAKESAKALGGLGILSL. Residues 318–338 are Stromal-facing; that stretch reads GGKFFLRRIFEVVAETRSSEA. The helical transmembrane segment at 339–359 threads the bilayer; it reads FVALCLLTVAGTSLVTQWLGF. Residues 360-389 are Lumenal, thylakoid-facing; it reads SDTLGAFLAGALLAETNFRTQIEADIRPFR. A helical membrane pass occupies residues 390-410; the sequence is GLLLGLFFVTTGTSIDMEVLF. Residues 411–415 lie on the Stromal side of the membrane; sequence REWPN. A helical transmembrane segment spans residues 416 to 436; that stretch reads VLSLLGGLIVIKTLIITAIGP. The Lumenal, thylakoid portion of the chain corresponds to 437–445; sequence RVGLTIQES. Residues 446–466 form a helical membrane-spanning segment; it reads VRVGFLLSQGGEFAFVVFSLA. At 467–468 the chain is on the stromal side; the sequence is NR. The chain crosses the membrane as a helical span at residues 469-489; sequence LGVLPNELNKLLIIVVVLSMA. At 490–526 the chain is on the lumenal, thylakoid side; the sequence is LTPYLNQLGRKAADFLDERLDPGEKIGEDVNFDVSES. Positions 524–649 constitute an RCK N-terminal domain; it reads SESIVIIGFG…KKAGATDAIL (126 aa). The helical transmembrane segment at 527 to 547 threads the bilayer; that stretch reads IVIIGFGQMGQVLANFLSTPL. At 548–776 the chain is on the stromal side; that stretch reads VSDSDLVGWP…FVGKADKAQD (229 aa). Positions 728-776 are disordered; sequence MQMKASDSNSDSAAEILQETAGLSQPPEIDDSSVNIDNGFVGKADKAQD.

It belongs to the monovalent cation:proton antiporter 2 (CPA2) transporter (TC 2.A.37) family. KEA (TC 2.A.37.1) subfamily. In terms of tissue distribution, expressed at low levels in flowers, siliques and leaves. Expressed at low levels in flowers and leaves. As to expression, most abundant splice form in all organs, including siliques, flowers, leaves and roots. Preferentially expressed in photosynthetically active tissues, including seedling cotyledons and mature leaves. In terms of tissue distribution, expressed in shoots and roots.

The protein resides in the plastid. It is found in the chloroplast membrane. It localises to the golgi apparatus membrane. Its subcellular location is the chloroplast thylakoid membrane. The enzyme catalyses K(+)(in) + H(+)(out) = K(+)(out) + H(+)(in). With respect to regulation, regulated by a mechanism involving lumenal C-terminus region; a fine-tuned balance between photoprotective energy dissipation in high light and a maximum quantum yield in low light involves a reduced activity under high light. In terms of biological role, electroneutral K(+)/H(+) efflux antiporter assuring proton efflux from the thylakoid lumen to the plastid stroma, thus increasing the membrane potential at the expense of the proton gradient (delta pH) component of the proton motive force (PMF). Promotes photosynthesis and growth in conditions where the chloroplast (cp)ATP synthase activity is low (e.g. cgl160 mutant background) by reducing the pH gradient across the thylakoid membrane. Accelerates photosynthetic acclimation in fluctuating light environments by modulating two components of the proton motive force, the proton gradient and the electric potential (delta Psi). Promotes the relaxation of photoprotective energy-dependent non-photochemical quenching (NPQ) after transitions from high to low light, thus enhancing photosystem II (PSII) quantum efficiency in fluctuating light. On transition from high to low light, slows down photoprotection by dissipating the pH gradient across the thylakoid membrane. During photosynthetic response on transition from dark to low light, involved in a sequential mechanism of adaptation; VCCN1 and CLCe first trigger the activation of photoprotection, which is later down-regulated by KEA3 to a low steady state, while adjusting electron transport. Together with the chloroplast NADH dehydrogenase-like (NDH) complex, maximizes photosynthesis efficiency after a long dark adaptation. Required in roots for rapid hyperosmotic-induced Ca(2+) responses and for osmo-sensory potentiation in hyperosmotic conditions. Its function is as follows. Low K(+)/H(+) efflux antiporter activity. Functionally, low K(+)/H(+) efflux antiporter activity. Promotes non-photochemical quenching (NPQ) in high light conditions. This Arabidopsis thaliana (Mouse-ear cress) protein is K(+) efflux antiporter 3, chloroplastic.